The following is a 584-amino-acid chain: Sodium/calcium exchanger NCL1 (584 aa).

5 helical membrane passes run 77–97, 120–140, 154–174, 215–235, and 245–265; these read FLPCTTTVLGNLFLVLAYGFL, LVGGLLLPILGALPDALLVLV, VLIGMGLLAGSTVFLLTLLWG, AARIMGISVIPFIIAQFPKML, and VLLALIVSFSLVLAYCLYQVF. 2 consecutive EF-hand domains span residues 305-340 and 345-380; these read PNEDVIKKLFHKIDMDESQTLSRAELHALIIGINFE and DKNDAVDKIMDDFDTSGNDIVEEAEFVSGMKRWLNE. Ca(2+)-binding residues include Asp318, Asp320, Ser322, Thr324, Glu329, Asp358, Ser360, Asn362, and Glu369. The next 5 helical transmembrane spans lie at 426 to 446, 466 to 486, 504 to 524, 531 to 551, and 561 to 581; these read WCITKAVGLLLLGSAIAAAFA, FISFIALPLATNSSEAVSAII, YGGVTMNNTLCLGVFLALIYI, FSSEVLIILLVCVIMGLFTSF, and LVAYMLYPLSLVVVYILDFVF.

This sequence belongs to the Ca(2+):cation antiporter (CaCA) (TC 2.A.19) family.

It localises to the cell membrane. Functionally, may function as a sodium/calcium exchanger (NCX) and participate in the maintenance of calcium homeostasis. May play a role abiotic stress responses. In Oryza sativa subsp. japonica (Rice), this protein is Sodium/calcium exchanger NCL1.